We begin with the raw amino-acid sequence, 896 residues long: NET1-associated nuclear protein 1 (896 aa).

WD repeat units follow at residues 295–334 (WHID…QQFL), 490–542 (LQDP…TNWN), 552–595 (GISV…SNWC), and 605–645 (NHFS…ESLE).

As to quaternary structure, interacts with snoRNA U3. Interacts with MPP10. Component of the ribosomal small subunit (SSU) processome composed of at least 40 protein subunits and snoRNA U3. In the absence of snoRNA3, forms a complex with other t-UTPs. This complex can associate with pre-18S ribosomal RNAs.

It is found in the nucleus. Its subcellular location is the nucleolus. Its function is as follows. Involved in nucleolar processing of pre-18S ribosomal RNA. Required for optimal pre-ribosomal RNA transcription by RNA polymerase I together with a subset of U3 proteins required for transcription (t-UTPs). The chain is NET1-associated nuclear protein 1 (NAN1) from Saccharomyces cerevisiae (strain ATCC 204508 / S288c) (Baker's yeast).